A 395-amino-acid chain; its full sequence is Prostaglandin D2 receptor 2 (395 aa).

Topologically, residues 1 to 33 (MSANATLKPLCPILEQMSRLQSHSNTSIRYIDH) are extracellular. 2 N-linked (GlcNAc...) asparagine glycosylation sites follow: Asn-4 and Asn-25. A helical membrane pass occupies residues 34 to 56 (AAVLLHGLASLLGLVENGVILFV). Residues 57–67 (VGCRMRQTVVT) are Cytoplasmic-facing. A helical membrane pass occupies residues 68–89 (TWVLHLALSDLLASASLPFFTY). Residues 90 to 106 (FLAVGHSWELGTTFCKL) lie on the Extracellular side of the membrane. Cys-104 and Cys-182 form a disulfide bridge. A helical transmembrane segment spans residues 107–127 (HSSIFFLNMFASGFLLSAISL). The Cytoplasmic segment spans residues 128–146 (DRCLQVVRPVWAQNHRTVA). The helical transmembrane segment at 147–168 (AAHKVCLVLWALAVLNTVPYFV) threads the bilayer. Over 169-210 (FRDTISRLDGRIMCYYNVLLLNPGPDRDATCNSRQVALAVSK) the chain is Extracellular. The chain crosses the membrane as a helical span at residues 211 to 231 (FLLAFLVPLAIIASSHAAVSL). At 232 to 247 (RLQHRGRRRPGRFVRL) the chain is on the cytoplasmic side. The chain crosses the membrane as a helical span at residues 248 to 269 (VAAVVAAFALCWGPYHVFSLLE). Topologically, residues 270-288 (ARAHANPGLRPLVWRGLPF) are extracellular. A helical transmembrane segment spans residues 289 to 308 (VTSLAFFNSVANPVLYVLTC). Over 309–395 (PDMLRKLRRS…LNRALSSTSS (87 aa)) the chain is Cytoplasmic. The Involved in the recycling of CRTH2 motif lies at 330–333 (DSEL). Phosphoserine occurs at positions 331 and 345. Residues 333–363 (LGGAGSSRRRRTSSTARSASPLALCSRPEEP) form a disordered region.

It belongs to the G-protein coupled receptor 1 family. In terms of processing, phosphorylated. As to expression, widespread expression. High expression in stomach, small intestine, heart and thymus. Intermediate expression in colon, spinal cord and peripheral blood and low expression in brain, skeletal muscle and spleen. Expressed also on Th2- and Tc2- type cells, eosinophils and basophils.

It is found in the cell membrane. Receptor for prostaglandin D2 (PGD2). Coupled to the G(i)-protein. Receptor activation may result in pertussis toxin-sensitive decreases in cAMP levels and Ca(2+) mobilization. PI3K signaling is also implicated in mediating PTGDR2 effects. PGD2 induced receptor internalization. CRTH2 internalization can be regulated by diverse kinases such as, PKC, PKA, GRK2, GPRK5/GRK5 and GRK6. Receptor activation is responsible, at least in part, in immune regulation and allergic/inflammation responses. This chain is Prostaglandin D2 receptor 2 (PTGDR2), found in Homo sapiens (Human).